The following is a 537-amino-acid chain: Carbamoyl phosphate synthase large chain, C-terminal section (537 aa).

The interval 1-395 (MSKKVVILGS…AYYKAQLSAG (395 aa)) is carbamoyl phosphate synthetic domain. Positions 122–313 (RELIIELGLK…LAKIATKVAI (192 aa)) constitute an ATP-grasp domain. 10 residues coordinate ATP: Arg158, Lys197, Leu199, Glu204, Gly229, Val230, His231, Ser232, Gln272, and Glu284. Mg(2+) contacts are provided by Gln272, Glu284, and Asn286. The Mn(2+) site is built by Gln272, Glu284, and Asn286. The MGS-like domain occupies 396–537 (YRLPEKGNLF…VHSLQEIYNI (142 aa)). An allosteric domain region spans residues 396-537 (YRLPEKGNLF…VHSLQEIYNI (142 aa)).

This sequence belongs to the CarB family. In terms of assembly, composed of two chains; the small (or glutamine) chain promotes the hydrolysis of glutamine to ammonia, which is used by the large (or ammonia) chain to synthesize carbamoyl phosphate. Tetramer of heterodimers (alpha,beta)4. Mg(2+) serves as cofactor. Mn(2+) is required as a cofactor.

The enzyme catalyses hydrogencarbonate + L-glutamine + 2 ATP + H2O = carbamoyl phosphate + L-glutamate + 2 ADP + phosphate + 2 H(+). The catalysed reaction is hydrogencarbonate + NH4(+) + 2 ATP = carbamoyl phosphate + 2 ADP + phosphate + 2 H(+). It functions in the pathway amino-acid biosynthesis; L-arginine biosynthesis; carbamoyl phosphate from bicarbonate: step 1/1. The protein operates within pyrimidine metabolism; UMP biosynthesis via de novo pathway; (S)-dihydroorotate from bicarbonate: step 1/3. Functionally, large subunit of the glutamine-dependent carbamoyl phosphate synthetase (CPSase). CPSase catalyzes the formation of carbamoyl phosphate from the ammonia moiety of glutamine, carbonate, and phosphate donated by ATP, constituting the first step of 2 biosynthetic pathways, one leading to arginine and/or urea and the other to pyrimidine nucleotides. The large subunit (synthetase) binds the substrates ammonia (free or transferred from glutamine from the small subunit), hydrogencarbonate and ATP and carries out an ATP-coupled ligase reaction, activating hydrogencarbonate by forming carboxy phosphate which reacts with ammonia to form carbamoyl phosphate. This Aquifex aeolicus (strain VF5) protein is Carbamoyl phosphate synthase large chain, C-terminal section (carB2).